We begin with the raw amino-acid sequence, 102 residues long: Small ribosomal subunit protein uS10 (102 aa).

The protein belongs to the universal ribosomal protein uS10 family. In terms of assembly, part of the 30S ribosomal subunit.

Its function is as follows. Involved in the binding of tRNA to the ribosomes. The chain is Small ribosomal subunit protein uS10 from Streptococcus pneumoniae (strain Taiwan19F-14).